We begin with the raw amino-acid sequence, 91 residues long: Small ribosomal subunit protein bS18 (91 aa).

It belongs to the bacterial ribosomal protein bS18 family. In terms of assembly, part of the 30S ribosomal subunit. Forms a tight heterodimer with protein bS6.

Binds as a heterodimer with protein bS6 to the central domain of the 16S rRNA, where it helps stabilize the platform of the 30S subunit. This is Small ribosomal subunit protein bS18 from Burkholderia ambifaria (strain MC40-6).